A 154-amino-acid polypeptide reads, in one-letter code: SsrA-binding protein (154 aa).

Belongs to the SmpB family.

Its subcellular location is the cytoplasm. Its function is as follows. Required for rescue of stalled ribosomes mediated by trans-translation. Binds to transfer-messenger RNA (tmRNA), required for stable association of tmRNA with ribosomes. tmRNA and SmpB together mimic tRNA shape, replacing the anticodon stem-loop with SmpB. tmRNA is encoded by the ssrA gene; the 2 termini fold to resemble tRNA(Ala) and it encodes a 'tag peptide', a short internal open reading frame. During trans-translation Ala-aminoacylated tmRNA acts like a tRNA, entering the A-site of stalled ribosomes, displacing the stalled mRNA. The ribosome then switches to translate the ORF on the tmRNA; the nascent peptide is terminated with the 'tag peptide' encoded by the tmRNA and targeted for degradation. The ribosome is freed to recommence translation, which seems to be the essential function of trans-translation. This chain is SsrA-binding protein, found in Streptococcus thermophilus (strain CNRZ 1066).